The following is a 460-amino-acid chain: Argininosuccinate lyase (460 aa).

Belongs to the lyase 1 family. Argininosuccinate lyase subfamily.

The protein localises to the cytoplasm. The enzyme catalyses 2-(N(omega)-L-arginino)succinate = fumarate + L-arginine. It participates in amino-acid biosynthesis; L-arginine biosynthesis; L-arginine from L-ornithine and carbamoyl phosphate: step 3/3. In Staphylococcus haemolyticus (strain JCSC1435), this protein is Argininosuccinate lyase.